The sequence spans 127 residues: Protein HI_1253 (127 aa).

Helical transmembrane passes span 13-33 (VIMLVHLHIFFAFLSLALLVI), 61-81 (LIVSGVVILYLFAFGIEWWLV), 82-102 (AKFALLILYIVFAAKFFSKKV), and 107-127 (SIFFWLACVSFIGAMLIAYLK).

This sequence belongs to the SirB2 family.

Its subcellular location is the cell inner membrane. This Haemophilus influenzae (strain ATCC 51907 / DSM 11121 / KW20 / Rd) protein is Protein HI_1253.